Consider the following 195-residue polypeptide: Imidazoleglycerol-phosphate dehydratase (195 aa).

This sequence belongs to the imidazoleglycerol-phosphate dehydratase family.

The protein resides in the cytoplasm. It catalyses the reaction D-erythro-1-(imidazol-4-yl)glycerol 3-phosphate = 3-(imidazol-4-yl)-2-oxopropyl phosphate + H2O. It participates in amino-acid biosynthesis; L-histidine biosynthesis; L-histidine from 5-phospho-alpha-D-ribose 1-diphosphate: step 6/9. The chain is Imidazoleglycerol-phosphate dehydratase from Endomicrobium trichonymphae.